The sequence spans 426 residues: Serine--tRNA ligase (426 aa).

231-233 contacts L-serine; sequence TAE. 262 to 264 is an ATP binding site; sequence RSE. Glutamate 285 provides a ligand contact to L-serine. 349–352 is a binding site for ATP; sequence EISS. Serine 385 contributes to the L-serine binding site.

The protein belongs to the class-II aminoacyl-tRNA synthetase family. Type-1 seryl-tRNA synthetase subfamily. In terms of assembly, homodimer. The tRNA molecule binds across the dimer.

It is found in the cytoplasm. It carries out the reaction tRNA(Ser) + L-serine + ATP = L-seryl-tRNA(Ser) + AMP + diphosphate + H(+). It catalyses the reaction tRNA(Sec) + L-serine + ATP = L-seryl-tRNA(Sec) + AMP + diphosphate + H(+). The protein operates within aminoacyl-tRNA biosynthesis; selenocysteinyl-tRNA(Sec) biosynthesis; L-seryl-tRNA(Sec) from L-serine and tRNA(Sec): step 1/1. Its function is as follows. Catalyzes the attachment of serine to tRNA(Ser). Is also able to aminoacylate tRNA(Sec) with serine, to form the misacylated tRNA L-seryl-tRNA(Sec), which will be further converted into selenocysteinyl-tRNA(Sec). The chain is Serine--tRNA ligase from Brevibacillus brevis (strain 47 / JCM 6285 / NBRC 100599).